A 266-amino-acid chain; its full sequence is Vitamin B12-binding protein (266 aa).

The N-terminal stretch at M1–A22 is a signal peptide. The Fe/B12 periplasmic-binding domain maps to R25–N266. Residues Y50 and D242–R246 each bind cyanocob(III)alamin. The cysteines at positions 183 and 259 are disulfide-linked.

It belongs to the BtuF family. As to quaternary structure, the complex is composed of two ATP-binding proteins (BtuD), two transmembrane proteins (BtuC) and a solute-binding protein (BtuF).

It is found in the periplasm. In terms of biological role, part of the ABC transporter complex BtuCDF involved in vitamin B12 import. Binds vitamin B12 and delivers it to the periplasmic surface of BtuC. The chain is Vitamin B12-binding protein from Salmonella typhi.